The chain runs to 289 residues: Bidirectional sugar transporter SWEET10 (289 aa).

The Extracellular portion of the chain corresponds to 1–5 (MAISQ). The helical transmembrane segment at 6–26 (AVLATVFGILGNIISFFVCLA) threads the bilayer. Positions 11 to 96 (VFGILGNIIS…SLFFFYAPKK (86 aa)) constitute a MtN3/slv 1 domain. Residues 27-43 (PIPTFVRIYKRKSSEGY) lie on the Cytoplasmic side of the membrane. Residues 44-64 (QSIPYVISLFSAMLWMYYAMI) form a helical membrane-spanning segment. At 65–70 (KKDAMM) the chain is on the extracellular side. A helical membrane pass occupies residues 71 to 91 (LITINSFAFVVQIVYISLFFF). Residues 92 to 103 (YAPKKEKTLTVK) lie on the Cytoplasmic side of the membrane. A helical transmembrane segment spans residues 104–124 (FVLFVDVLGFGAIFVLTYFII). Residues 125–131 (HANKRVQ) are Extracellular-facing. Positions 131–214 (QVLGYICMVF…QMILFLIYKK (84 aa)) constitute a MtN3/slv 2 domain. A helical membrane pass occupies residues 132 to 152 (VLGYICMVFALSVFVAPLGII). At 153–165 (RKVIKTKSAEFMP) the chain is on the cytoplasmic side. Residues 166-186 (FGLSFFLTLSAVMWFFYGLLL) traverse the membrane as a helical segment. Residues 187-190 (KDMN) lie on the Extracellular side of the membrane. The chain crosses the membrane as a helical span at residues 191–211 (IALPNVLGFIFGVLQMILFLI). Residues 212–289 (YKKPGTKVLE…EKEVFLISKN (78 aa)) are Cytoplasmic-facing.

It belongs to the SWEET sugar transporter family. In terms of assembly, forms heterooligomers with SWEET8.

It localises to the cell membrane. Mediates both low-affinity uptake and efflux of sugar across the plasma membrane. This Arabidopsis thaliana (Mouse-ear cress) protein is Bidirectional sugar transporter SWEET10.